The sequence spans 197 residues: FMN-dependent NADH:quinone oxidoreductase (197 aa).

Position 10 (S10) interacts with FMN.

Belongs to the azoreductase type 1 family. In terms of assembly, homodimer. Requires FMN as cofactor.

It carries out the reaction 2 a quinone + NADH + H(+) = 2 a 1,4-benzosemiquinone + NAD(+). The enzyme catalyses N,N-dimethyl-1,4-phenylenediamine + anthranilate + 2 NAD(+) = 2-(4-dimethylaminophenyl)diazenylbenzoate + 2 NADH + 2 H(+). Its function is as follows. Quinone reductase that provides resistance to thiol-specific stress caused by electrophilic quinones. Functionally, also exhibits azoreductase activity. Catalyzes the reductive cleavage of the azo bond in aromatic azo compounds to the corresponding amines. In Mycoplasma pneumoniae (strain ATCC 29342 / M129 / Subtype 1) (Mycoplasmoides pneumoniae), this protein is FMN-dependent NADH:quinone oxidoreductase.